A 220-amino-acid polypeptide reads, in one-letter code: dITP/XTP pyrophosphatase (220 aa).

13–18 (SHNAGK) is a binding site for substrate. 2 residues coordinate Mg(2+): Asp45 and Asp74. Asp74 functions as the Proton acceptor in the catalytic mechanism. Substrate is bound by residues Ser75, 163 to 166 (FGYD), Lys186, and 199 to 200 (HR).

This sequence belongs to the HAM1 NTPase family. Homodimer. It depends on Mg(2+) as a cofactor.

The enzyme catalyses XTP + H2O = XMP + diphosphate + H(+). It carries out the reaction dITP + H2O = dIMP + diphosphate + H(+). It catalyses the reaction ITP + H2O = IMP + diphosphate + H(+). Its function is as follows. Pyrophosphatase that catalyzes the hydrolysis of nucleoside triphosphates to their monophosphate derivatives, with a high preference for the non-canonical purine nucleotides XTP (xanthosine triphosphate), dITP (deoxyinosine triphosphate) and ITP. Seems to function as a house-cleaning enzyme that removes non-canonical purine nucleotides from the nucleotide pool, thus preventing their incorporation into DNA/RNA and avoiding chromosomal lesions. The chain is dITP/XTP pyrophosphatase from Mesorhizobium japonicum (strain LMG 29417 / CECT 9101 / MAFF 303099) (Mesorhizobium loti (strain MAFF 303099)).